Reading from the N-terminus, the 242-residue chain is Spiralin (242 aa).

A signal peptide spans 1–23; that stretch reads MKKLLSILAVFGVSAVGTTSVVA. A lipid anchor (N-palmitoyl cysteine) is attached at cysteine 24. The S-diacylglycerol cysteine moiety is linked to residue cysteine 24.

The protein belongs to the spiralin family. As to quaternary structure, seems to occur as dimer, tetramers, and large oligomers of identical chains. In terms of processing, palmitate and stearate are the major lipid components.

The protein localises to the cell membrane. Major membrane protein of spiroplasma. The chain is Spiralin (spi) from Spiroplasma melliferum.